The chain runs to 143 residues: Large ribosomal subunit protein uL11 (143 aa).

It belongs to the universal ribosomal protein uL11 family. Part of the ribosomal stalk of the 50S ribosomal subunit. Interacts with L10 and the large rRNA to form the base of the stalk. L10 forms an elongated spine to which L12 dimers bind in a sequential fashion forming a multimeric L10(L12)X complex. One or more lysine residues are methylated.

Functionally, forms part of the ribosomal stalk which helps the ribosome interact with GTP-bound translation factors. The sequence is that of Large ribosomal subunit protein uL11 from Phenylobacterium zucineum (strain HLK1).